The chain runs to 264 residues: MAATAAALAVTDELALPLRAVGDLAAAAGVSREEVVVITQCASLGGKLPFDDASVGSVLAVIKKVENLGDLFITEISRVLKAGGMVLIQSSPSDQDPNNSIQRKLLLGGFVDVQASAASSQDSEHSVTIKAKKVSWSMGSSFPLKKATKGLPKIQIDDDSELIDEDSLLTEDDLKKPELPVVGDCEVGATRKACKNCTCGRAEAEEKVEKLNLTSEQINNPQSACGNCGLGDAFRCGTCPYRGLPAFKPGEKIALPGNFLAADL.

The N-terminal SAM-like domain stretch occupies residues 1-142 (MAATAAALAV…KVSWSMGSSF (142 aa)). Positions 143 to 174 (PLKKATKGLPKIQIDDDSELIDEDSLLTEDDL) are linker. [2Fe-2S] cluster-binding residues include Cys185, Cys194, Cys197, and Cys199. Residues 185–199 (CEVGATRKACKNCTC) form a fe-S binding site A region. Residues Cys225, Cys228, Cys236, and Cys239 each contribute to the [4Fe-4S] cluster site. Short sequence motifs (cx2C motif) lie at residues 225 to 228 (CGNC) and 236 to 239 (CGTC). The interval 225–239 (CGNCGLGDAFRCGTC) is fe-S binding site B.

Belongs to the anamorsin family. As to quaternary structure, monomer. It depends on [2Fe-2S] cluster as a cofactor. The cofactor is [4Fe-4S] cluster.

The protein resides in the cytoplasm. It is found in the mitochondrion intermembrane space. Functionally, component of the cytosolic iron-sulfur (Fe-S) protein assembly (CIA) machinery. Required for the maturation of extramitochondrial Fe-S proteins. Part of an electron transfer chain functioning in an early step of cytosolic Fe-S biogenesis, facilitating the de novo assembly of a [4Fe-4S] cluster on the cytosolic Fe-S scaffold complex. Electrons are transferred from NADPH via a FAD- and FMN-containing diflavin oxidoreductase. Together with the diflavin oxidoreductase, also required for the assembly of the diferric tyrosyl radical cofactor of ribonucleotide reductase (RNR), probably by providing electrons for reduction during radical cofactor maturation in the catalytic small subunit. This Oryza sativa subsp. indica (Rice) protein is Anamorsin homolog 2.